The primary structure comprises 179 residues: Large ribosomal subunit protein uL5 (179 aa).

This sequence belongs to the universal ribosomal protein uL5 family. In terms of assembly, part of the 50S ribosomal subunit; part of the 5S rRNA/L5/L18/L25 subcomplex. Contacts the 5S rRNA and the P site tRNA. Forms a bridge to the 30S subunit in the 70S ribosome.

In terms of biological role, this is one of the proteins that bind and probably mediate the attachment of the 5S RNA into the large ribosomal subunit, where it forms part of the central protuberance. In the 70S ribosome it contacts protein S13 of the 30S subunit (bridge B1b), connecting the 2 subunits; this bridge is implicated in subunit movement. Contacts the P site tRNA; the 5S rRNA and some of its associated proteins might help stabilize positioning of ribosome-bound tRNAs. The chain is Large ribosomal subunit protein uL5 from Halorhodospira halophila (strain DSM 244 / SL1) (Ectothiorhodospira halophila (strain DSM 244 / SL1)).